Here is a 536-residue protein sequence, read N- to C-terminus: Chlorophyllide a oxygenase, chloroplastic (536 aa).

Residues Met-1 to Arg-36 constitute a chloroplast transit peptide. Residues Ile-123 to Arg-150 adopt a coiled-coil conformation. The region spanning Trp-221–Ile-321 is the Rieske domain. Positions 262, 264, 281, and 284 each coordinate [2Fe-2S] cluster. Asp-360, Asp-364, His-367, and His-372 together coordinate Fe cation.

The protein localises to the plastid. Its subcellular location is the chloroplast membrane. It is found in the chloroplast thylakoid membrane. The enzyme catalyses chlorophyllide a + 2 NADPH + 2 O2 + 2 H(+) = chlorophyllide b + 2 NADP(+) + 3 H2O. Its pathway is porphyrin-containing compound metabolism; chlorophyll biosynthesis. Its function is as follows. Catalyzes a two-step oxygenase reaction involved in the synthesis of chlorophyll b. Acts specifically on the non-esterified chlorophyllide a and not on chlorophyll a. The polypeptide is Chlorophyllide a oxygenase, chloroplastic (CAO) (Arabidopsis thaliana (Mouse-ear cress)).